A 320-amino-acid chain; its full sequence is GTP 3',8-cyclase (320 aa).

The 224-residue stretch at Leu4–Lys227 folds into the Radical SAM core domain. Arg13 serves as a coordination point for GTP. [4Fe-4S] cluster contacts are provided by Cys20 and Cys24. Residue Tyr26 participates in S-adenosyl-L-methionine binding. Residue Cys27 coordinates [4Fe-4S] cluster. Arg63 provides a ligand contact to GTP. Residue Gly67 coordinates S-adenosyl-L-methionine. Thr94 lines the GTP pocket. Ser118 lines the S-adenosyl-L-methionine pocket. Residue Lys155 participates in GTP binding. Met189 contacts S-adenosyl-L-methionine. [4Fe-4S] cluster contacts are provided by Cys249 and Cys252. Arg254–Arg256 contributes to the GTP binding site. Residue Cys266 coordinates [4Fe-4S] cluster. The span at Lys300–Asn312 shows a compositional bias: basic and acidic residues. The interval Lys300–Gly320 is disordered.

It belongs to the radical SAM superfamily. MoaA family. Monomer and homodimer. It depends on [4Fe-4S] cluster as a cofactor.

The catalysed reaction is GTP + AH2 + S-adenosyl-L-methionine = (8S)-3',8-cyclo-7,8-dihydroguanosine 5'-triphosphate + 5'-deoxyadenosine + L-methionine + A + H(+). Its pathway is cofactor biosynthesis; molybdopterin biosynthesis. Catalyzes the cyclization of GTP to (8S)-3',8-cyclo-7,8-dihydroguanosine 5'-triphosphate. The polypeptide is GTP 3',8-cyclase (Alkaliphilus oremlandii (strain OhILAs) (Clostridium oremlandii (strain OhILAs))).